Consider the following 439-residue polypeptide: MRHFFKLGLVSAAVLGSQMTLANDFWSQDRQWLLGDWGGERQQLEKQGYKFTASIMSQAATNLDGGYNDSNTLENAGQLTLGANFDLSKIAGWEDTTAAIMITKRDGNSLTLERIKDPRSTTLGNTQEIYGRGKIWRLTQAWVKKGFNDNTVQFKIGRMGMSDDFNSSQCEFQNLLLCGGQLGKSIGSIWYNWPVGLWGTNVKYQFAPEWTLGLGVYEVNPDNVKTQSNSDGFNLDMNNVKGATIPVELAWKPKLAMFNGLPGEYKVGALYSTADANDVGTVSKVHDSKHSFWINTQQQLTQHNDNAKRGLFVSFNGVVNDKATTMVESTQQLALWYKGPFDSRPNDSIGFGLANYVVNKRVRDRQIATNESRGYYEYDDLASNYVPIQHDELNVELNYTYQWSPAVMLRPNIQYIHQPAGVKEVDDAWVAGLSMRLNF.

The N-terminal stretch at 1 to 22 (MRHFFKLGLVSAAVLGSQMTLA) is a signal peptide.

It belongs to the OprB family.

It is found in the cell outer membrane. Functionally, could be involved in the transport of quinate or shikimate. The polypeptide is Putative porin QuiX (quiX) (Acinetobacter baylyi (strain ATCC 33305 / BD413 / ADP1)).